Consider the following 212-residue polypeptide: RNA chaperone ProQ (212 aa).

The segment at 107 to 153 (QDKAKAKRVAQAKSANPAAKTAKKPVKKPVAKRPKQTQSSKPAKEPV) is disordered. Low complexity predominate over residues 117-126 (QAKSANPAAK). Positions 127-141 (TAKKPVKKPVAKRPK) are enriched in basic residues.

Belongs to the ProQ family.

It localises to the cytoplasm. RNA chaperone with significant RNA binding, RNA strand exchange and RNA duplexing activities. The sequence is that of RNA chaperone ProQ from Shewanella halifaxensis (strain HAW-EB4).